The chain runs to 192 residues: Thymidine kinase (192 aa).

Residues 9-16 and 87-90 each bind ATP; these read SAMNAGKS and DECQ. E88 acts as the Proton acceptor in catalysis. The Zn(2+) site is built by C145, C147, C182, and H185.

Belongs to the thymidine kinase family. In terms of assembly, homotetramer.

Its subcellular location is the cytoplasm. The enzyme catalyses thymidine + ATP = dTMP + ADP + H(+). In Aliivibrio fischeri (strain ATCC 700601 / ES114) (Vibrio fischeri), this protein is Thymidine kinase.